The chain runs to 253 residues: uncharacterized protein (253 aa).

Position 6–30 (6–30) interacts with NADP(+); sequence IITASDSGIGKECALLLAQQGFDIG. Residue Ser140 participates in substrate binding. Tyr153 serves as the catalytic Proton acceptor.

It belongs to the short-chain dehydrogenases/reductases (SDR) family.

This is an uncharacterized protein from Escherichia coli (strain K12).